Consider the following 437-residue polypeptide: Enolase (437 aa).

(2R)-2-phosphoglycerate is bound at residue Gln162. Residue Glu204 is the Proton donor of the active site. Residues Asp251, Glu297, and Asp324 each coordinate Mg(2+). (2R)-2-phosphoglycerate is bound by residues Lys349, Arg378, Ser379, and Lys400. Lys349 serves as the catalytic Proton acceptor.

The protein belongs to the enolase family. The cofactor is Mg(2+).

The protein resides in the cytoplasm. It is found in the secreted. It localises to the cell surface. It catalyses the reaction (2R)-2-phosphoglycerate = phosphoenolpyruvate + H2O. It participates in carbohydrate degradation; glycolysis; pyruvate from D-glyceraldehyde 3-phosphate: step 4/5. Its function is as follows. Catalyzes the reversible conversion of 2-phosphoglycerate (2-PG) into phosphoenolpyruvate (PEP). It is essential for the degradation of carbohydrates via glycolysis. The polypeptide is Enolase (Chlorobium luteolum (strain DSM 273 / BCRC 81028 / 2530) (Pelodictyon luteolum)).